We begin with the raw amino-acid sequence, 162 residues long: MAAPKGNRFWEARSSHGRNPKFESPEALWAACCEYFEWVEANPLWEMKAFSYQGEVIQEPIAKMRAMTITGLTLFIDVTLETWRTYRLREDLSEVVTRAEQVIYDQKFSGAAADLLNANIIARDLGLKEQSQVEDVTPDKGDRDKRRSRIKELFNRGTGRDS.

Residues 7–27 are helix-turn-helix (HTH); the sequence is NRFWEARSSHGRNPKFESPEA. The segment at 132–162 is disordered; that stretch reads QVEDVTPDKGDRDKRRSRIKELFNRGTGRDS. Basic and acidic residues predominate over residues 137 to 162; that stretch reads TPDKGDRDKRRSRIKELFNRGTGRDS. The interaction with the terminase large subunit gp2 stretch occupies residues 140–162; it reads KGDRDKRRSRIKELFNRGTGRDS. Residues 143–152 mediate DNA binding; the sequence is RDKRRSRIKE.

Belongs to the P22likvirus small terminase family. As to quaternary structure, homononamer; forms a ring-like structure through which genomic DNA is translocated into the capsid. Interacts with the terminase small subunit; the active complex is composed of dimer of terminase large subunits and a nonamer ring of terminase small subunits.

In terms of biological role, the terminase small subunit binds to the packaging initiation site and regulates the ATPase activity of the terminase large subunit. The terminase lies at a unique vertex of the procapsid and is composed of two subunits, a small terminase subunit involved in viral DNA recognition (packaging 'pac' sequence), and a large terminase subunit possessing endonucleolytic and ATPase activities. Both terminase subunits heterooligomerize and are docked on the portal protein to form the packaging machine. The terminase large subunit exhibits endonuclease activity and cleaves the viral genome concatemer once the capsid is full (headful packaging). Once the capsid is packaged with the DNA, the terminase complex is substituted by neck proteins. This chain is Terminase, small subunit (3), found in Salmonella typhimurium (Bacteriophage P22).